We begin with the raw amino-acid sequence, 263 residues long: Acetylglutamate kinase (263 aa).

Substrate is bound by residues 48 to 49, Arg70, and Asn162; that span reads GG.

Belongs to the acetylglutamate kinase family. ArgB subfamily.

Its subcellular location is the cytoplasm. The enzyme catalyses N-acetyl-L-glutamate + ATP = N-acetyl-L-glutamyl 5-phosphate + ADP. The protein operates within amino-acid biosynthesis; L-arginine biosynthesis; N(2)-acetyl-L-ornithine from L-glutamate: step 2/4. Functionally, catalyzes the ATP-dependent phosphorylation of N-acetyl-L-glutamate. This is Acetylglutamate kinase from Vibrio parahaemolyticus serotype O3:K6 (strain RIMD 2210633).